The primary structure comprises 571 residues: Optineurin (571 aa).

Disordered regions lie at residues Met-1–Leu-32 and Leu-100–Arg-144. Positions Glu-38 to Ser-170 form a coiled coil. Residues Met-58 to Thr-209 are interaction with Rab8. 2 stretches are compositionally biased toward basic and acidic residues: residues Leu-100–Glu-123 and Arg-130–Leu-143. Positions Asp-176–Ile-181 match the LIR motif. A Phosphoserine; by TBK1 modification is found at Ser-177. A compositionally biased stretch (basic and acidic residues) spans Gly-186–His-197. 2 disordered regions span residues Gly-186 to Ser-210 and Val-255 to Ser-291. Phosphoserine is present on Ser-198. Polar residues predominate over residues Pro-201–Ser-210. Residues Cys-233–Asp-502 are a coiled coil. 2 stretches are compositionally biased toward basic and acidic residues: residues Val-255–Ile-268 and Ser-275–Pro-286. Ser-336 bears the Phosphoserine mark. Residues Thr-405–Ile-571 form an interaction with HD region. The segment at Arg-406–Arg-514 is interaction with MYO6. A UBAN motif is present at residues Asp-468–Arg-473. Ser-520 is subject to Phosphoserine. The segment at Gln-541 to Ile-571 adopts a CCHC NOA-type zinc-finger fold. Zn(2+) is bound by residues Cys-549, Cys-552, His-565, and Cys-569.

In terms of assembly, self-associates. Interacts with HD. Interacts with GTF3A. Interacts with MYO6. Interacts (via UBAN) with ubiquitinated TFRC. Interacts with GTP-bound Rab8 (RAB8A and/or RAB8B). Interacts with TBC1D17. Interacts with TBK1. Interacts with TRAF3. Binds to linear ubiquitin chains. Interacts with LC3 family members MAP1LC3A, MAP1LC3B, GABARAP, GABARAPL1 and GABARAPL2; OPTN phosphorylation increases the association (at least with MAP1LC3B). Interacts with RAB12; the interaction may be indirect. Interacts with TBK1; this interaction leads to the Golgi localization of TBK1 and its subsequent activation. Interacts with palmitoyltransferase ZDHHC17/HIP14; the interaction does not lead to palmitoylation of OPTN. Interacts with CYLD. Interacts with TOM1; the interaction is indirect and is mediated by MYO6, which acts as a bridge between TOM1 and OPTN. Interacts with USP12; the interaction is independent of USP12 deubiquitinase activity and may be involved in regulation of autophagic flux. Post-translationally, phosphorylated by TBK1, leading to restrict bacterial proliferation in case of infection.

Its subcellular location is the cytoplasm. The protein resides in the perinuclear region. It is found in the golgi apparatus. The protein localises to the trans-Golgi network. It localises to the cytoplasmic vesicle. Its subcellular location is the autophagosome. The protein resides in the recycling endosome. Functionally, plays an important role in the maintenance of the Golgi complex, in membrane trafficking, in exocytosis, through its interaction with myosin VI and Rab8. Links myosin VI to the Golgi complex and plays an important role in Golgi ribbon formation. Negatively regulates the induction of IFNB in response to RNA virus infection. Plays a neuroprotective role in the eye and optic nerve. Probably part of the TNF-alpha signaling pathway that can shift the equilibrium toward induction of cell death. May act by regulating membrane trafficking and cellular morphogenesis via a complex that contains Rab8 and huntingtin (HD). Mediates the interaction of Rab8 with the probable GTPase-activating protein TBC1D17 during Rab8-mediated endocytic trafficking, such as that of transferrin receptor (TFRC/TfR); regulates Rab8 recruitment to tubules emanating from the endocytic recycling compartment. Autophagy receptor that interacts directly with both the cargo to become degraded and an autophagy modifier of the MAP1 LC3 family; targets ubiquitin-coated bacteria (xenophagy) and appears to function in the same pathway as SQSTM1 and CALCOCO2/NDP52. The polypeptide is Optineurin (OPTN) (Macaca fascicularis (Crab-eating macaque)).